A 166-amino-acid chain; its full sequence is Myosin regulatory light chain 2, ventricular/cardiac muscle isoform (166 aa).

A N,N,N-trimethylalanine modification is found at alanine 2. A phosphoserine; by MLCK mark is found at serine 14 and serine 15. Serine 19 bears the Phosphoserine mark. 3 EF-hand domains span residues threonine 24–valine 59, aspartate 94–arginine 129, and phenylalanine 130–lysine 165. Ca(2+)-binding residues include aspartate 37, asparagine 39, aspartate 41, and aspartate 48. Phosphothreonine is present on threonine 52.

In terms of assembly, myosin is a hexamer of 2 heavy chains and 4 light chains. Interacts with MYOC. In terms of processing, N-terminus is methylated by METTL11A/NTM1. Phosphorylated by MYLK3 and MYLK2; promotes cardiac muscle contraction and function. Dephosphorylated by PPP1CB complexed to PPP1R12B. The phosphorylated form in adult is expressed as gradients across the heart from endocardium (low phosphorylation) to epicardium (high phosphorylation); regulates cardiac torsion and workload distribution. As to expression, abundantly expressed in both cardiac and slow skeletal muscle. In the adult heart, the phosphorylated form is highly expressed in epicardium and weakly in endocardium.

The protein localises to the cytoplasm. It is found in the myofibril. The protein resides in the sarcomere. It localises to the a band. In terms of biological role, contractile protein that plays a role in heart development and function. Following phosphorylation, plays a role in cross-bridge cycling kinetics and cardiac muscle contraction by increasing myosin lever arm stiffness and promoting myosin head diffusion; as a consequence of the increase in maximum contraction force and calcium sensitivity of contraction force. These events altogether slow down myosin kinetics and prolong duty cycle resulting in accumulated myosins being cooperatively recruited to actin binding sites to sustain thin filament activation as a means to fine-tune myofilament calcium sensitivity to force. During cardiogenesis plays an early role in cardiac contractility by promoting cardiac myofibril assembly. The chain is Myosin regulatory light chain 2, ventricular/cardiac muscle isoform from Mus musculus (Mouse).